We begin with the raw amino-acid sequence, 260 residues long: Phosphate import ATP-binding protein PstB (260 aa).

Positions 14–255 constitute an ABC transporter domain; that stretch reads VQVKNLAFYY…PRNKQTEDYI (242 aa). 46–53 lines the ATP pocket; it reads GPSGCGKS.

This sequence belongs to the ABC transporter superfamily. Phosphate importer (TC 3.A.1.7) family. The complex is composed of two ATP-binding proteins (PstB), two transmembrane proteins (PstC and PstA) and a solute-binding protein (PstS).

Its subcellular location is the cell inner membrane. The catalysed reaction is phosphate(out) + ATP + H2O = ADP + 2 phosphate(in) + H(+). Functionally, part of the ABC transporter complex PstSACB involved in phosphate import. Responsible for energy coupling to the transport system. The chain is Phosphate import ATP-binding protein PstB from Syntrophotalea carbinolica (strain DSM 2380 / NBRC 103641 / GraBd1) (Pelobacter carbinolicus).